The primary structure comprises 593 residues: NADH-quinone oxidoreductase subunit C/D (593 aa).

The segment at 1–184 (MTADNALYIP…DPYSLTLAKQ (184 aa)) is NADH dehydrogenase I subunit C. The NADH dehydrogenase I subunit D stretch occupies residues 208–593 (DYMFLNLGPN…IDFVMADVDR (386 aa)).

It in the N-terminal section; belongs to the complex I 30 kDa subunit family. This sequence in the C-terminal section; belongs to the complex I 49 kDa subunit family. As to quaternary structure, NDH-1 is composed of 13 different subunits. Subunits NuoB, CD, E, F, and G constitute the peripheral sector of the complex.

The protein resides in the cell inner membrane. It carries out the reaction a quinone + NADH + 5 H(+)(in) = a quinol + NAD(+) + 4 H(+)(out). In terms of biological role, NDH-1 shuttles electrons from NADH, via FMN and iron-sulfur (Fe-S) centers, to quinones in the respiratory chain. The immediate electron acceptor for the enzyme in this species is believed to be ubiquinone. Couples the redox reaction to proton translocation (for every two electrons transferred, four hydrogen ions are translocated across the cytoplasmic membrane), and thus conserves the redox energy in a proton gradient. This is NADH-quinone oxidoreductase subunit C/D from Pseudomonas syringae pv. syringae (strain B728a).